The following is a 453-amino-acid chain: Folate transporter 1 (453 aa).

Asn-36 carries N-linked (GlcNAc...) asparagine glycosylation. 5 consecutive transmembrane segments (helical) span residues 48–68, 73–93, 102–122, 136–156, and 161–181; these read PYWTYSYMLALIPMFILTDIL, IVMIEAIGLVATWALLVFGKG, VSFGVASAAEIAYYSYIYSIV, AAALMGKLVAFGLGQTLISTH, and LVLNQISLGAVCLVTIIAIFL. The N-linked (GlcNAc...) asparagine glycan is linked to Asn-260. Transmembrane regions (helical) follow at residues 276-296, 306-326, 331-351, 368-388, and 401-421; these read VANGVVEFVNTALGAFLSLFI, HGQMILFITSAIVAVLLYLCS, VLVAYSSYVVITSIYHMLITA, IFGCNTFVAVCLQSLLTLVVV, and FVIYSGYFALVASIFAFFFMI.

The protein belongs to the reduced folate carrier (RFC) transporter (TC 2.A.48) family. As to expression, highly expressed in pharynx and posterior part of the intestine. Expressed at lower levels in the body wall muscles, head muscles, and vulva muscles. Highly expressed in the intestine of the early larva, levels decrease in the later stages of development.

It localises to the membrane. Folate transporter. This chain is Folate transporter 1 (folt-1), found in Caenorhabditis elegans.